The primary structure comprises 540 residues: Maintenance of mitochondrial morphology protein 1 (540 aa).

The Lumenal portion of the chain corresponds to 1–25 (MAGPSNQTQPPPPVLTQPSLSFTQG). A helical membrane pass occupies residues 26-46 (LLVGQLSVVLLIGAFIKFFIF). The Cytoplasmic portion of the chain corresponds to 47-540 (GEAPPHPSRN…GSMPDPVVVT (494 aa)). Disordered stretches follow at residues 52 to 135 (HPSR…SHQP), 275 to 331 (GPGT…ATAA), 416 to 471 (GRTG…GGSM), and 509 to 540 (YGGA…VVVT). 3 stretches are compositionally biased toward polar residues: residues 69-81 (YSLN…SSPR), 88-105 (STSN…NTRS), and 112-121 (YSATPTNPTS). Basic residues predominate over residues 122–132 (KHSRSRPHHSS). An SMP-LTD domain is found at 134–409 (QPESLDWFNV…EPRVQVVGLP (276 aa)). Residues 321–331 (TNTNTAGATAA) are compositionally biased toward low complexity. Gly residues-rich tracts occupy residues 442–471 (TAGG…GGSM) and 511–521 (GAQGGGGGGGR).

Belongs to the MMM1 family. In terms of assembly, homodimer. Component of the ER-mitochondria encounter structure (ERMES) or MDM complex, composed of MMM1, MDM10, MDM12 and MDM34. An MMM1 homodimer associates with one molecule of MDM12 on each side in a pairwise head-to-tail manner, and the SMP-LTD domains of MMM1 and MDM12 generate a continuous hydrophobic tunnel for phospholipid trafficking.

It is found in the endoplasmic reticulum membrane. Component of the ERMES/MDM complex, which serves as a molecular tether to connect the endoplasmic reticulum (ER) and mitochondria. Components of this complex are involved in the control of mitochondrial shape and protein biogenesis, and function in nonvesicular lipid trafficking between the ER and mitochondria. The MDM12-MMM1 subcomplex functions in the major beta-barrel assembly pathway that is responsible for biogenesis of all outer membrane beta-barrel proteins, and acts in a late step after the SAM complex. The MDM10-MDM12-MMM1 subcomplex further acts in the TOM40-specific pathway after the action of the MDM12-MMM1 complex. Essential for establishing and maintaining the structure of mitochondria and maintenance of mtDNA nucleoids. This is Maintenance of mitochondrial morphology protein 1 from Blastomyces gilchristii (strain SLH14081) (Blastomyces dermatitidis).